The following is a 558-amino-acid chain: Probable beta-glucosidase btgE (558 aa).

The signal sequence occupies residues 1–18 (MKAAILATAAALTGSALA). Disordered regions lie at residues 64 to 105 (STPS…PETP) and 251 to 305 (LPSS…QMGM). 2 stretches are compositionally biased toward low complexity: residues 76-105 (PETTSTEEVTTTLHSTSTSTVTVTATPETP) and 252-292 (PSSS…SSSA). Positions 293–305 (EVPQTTGSGQMGM) are enriched in polar residues. Glu-399 serves as the catalytic Proton donor. Glu-495 acts as the Nucleophile in catalysis.

It belongs to the glycosyl hydrolase 17 family.

The protein resides in the secreted. The protein localises to the cell wall. It carries out the reaction Hydrolysis of terminal, non-reducing beta-D-glucosyl residues with release of beta-D-glucose.. The protein operates within glycan metabolism; cellulose degradation. Its function is as follows. Beta-glucosidases are one of a number of cellulolytic enzymes involved in the degradation of cellulosic biomass. Catalyzes the last step releasing glucose from the inhibitory cellobiose. The polypeptide is Probable beta-glucosidase btgE (btgE) (Aspergillus terreus (strain NIH 2624 / FGSC A1156)).